A 484-amino-acid chain; its full sequence is Keratin, type I cytoskeletal 14 (484 aa).

Residues 1–20 are disordered; it reads MATCSRQFTSSSSMKGSCGI. The interval 1 to 120 is head; it reads MATCSRQFTS…GIGDGLLVGS (120 aa). The tract at residues 121–156 is coil 1A; the sequence is EKVTMQNLNDRLATYLDKVRALEEANTELEVKIRDW. The 312-residue stretch at 121–432 folds into the IF rod domain; it reads EKVTMQNLND…RLLEGEDAHL (312 aa). Residues 157-174 are linker 1; sequence YQRQRPTEIKDYSPYFKT. A coil 1B region spans residues 175–266; the sequence is IEDLKSKILA…KNHEEEMASM (92 aa). The interval 267 to 289 is linker 12; the sequence is RGQVGGDVNVEMDAAPGVDLSRI. The tract at residues 290-428 is coil 2; the sequence is LNEMRDQYEK…ATYRRLLEGE (139 aa). The tail stretch occupies residues 429 to 484; sequence DAHLSSSQFSSSSQFSSGSQSSRDVTSTNRQIRTKVMDVHDGKVVSTHEQVLRTKN. The segment at 431–484 is interaction with Type I keratins and keratin filaments; it reads HLSSSQFSSSSQFSSGSQSSRDVTSTNRQIRTKVMDVHDGKVVSTHEQVLRTKN. Residues 435-450 are compositionally biased toward low complexity; it reads SQFSSSSQFSSGSQSS. The interval 435–457 is disordered; that stretch reads SQFSSSSQFSSGSQSSRDVTSTN. S447 bears the Phosphoserine mark.

This sequence belongs to the intermediate filament family. As to quaternary structure, heterotetramer of two type I and two type II keratins. Forms a disulfide-linked heterodimer (via 2B domains) with KRT5 (via 2B domains). Forms a heterodimer with KRT1; the interaction is more abundant in the absence of KRT5. Interacts with PLEC isoform 1C, when in a heterodimer with KRT5. Interacts with TRADD and with keratin filaments. Associates with other type I keratins. Interacts with EPPK1. Interacts with KLHL24. Interacts with PKP1 (via N-terminus) and PKP2. In terms of processing, a disulfide bond is formed between rather than within filaments and promotes the formation of a keratin filament cage around the nucleus. Ubiquitinated by the BCR(KLHL24) E3 ubiquitin ligase complex. As to expression, expressed in the corneal epithelium (at protein level). Expressed in the basal layer of the epidermis and the outer root sheath of hair follicles (at protein level). Expressed in the epithelial basal layer in the tail epidermis. Expressed in the parabasal cell row, basal cell layer, and suprabasal epithelial layer of the tongue.

The protein resides in the cytoplasm. Its subcellular location is the nucleus. Its function is as follows. The nonhelical tail domain is involved in promoting KRT5-KRT14 filaments to self-organize into large bundles and enhances the mechanical properties involved in resilience of keratin intermediate filaments in vitro. In Mus musculus (Mouse), this protein is Keratin, type I cytoskeletal 14 (Krt14).